The following is a 553-amino-acid chain: Membrane protein insertase YidC (553 aa).

The next 5 membrane-spanning stretches (helical) occupy residues 7–24 (VLWV…DNWQ), 365–385 (WGWA…PLSA), 435–455 (LPVV…LASV), 474–494 (PYFI…SLNP), and 509–529 (PIAF…YYVV).

This sequence belongs to the OXA1/ALB3/YidC family. Type 1 subfamily. Interacts with the Sec translocase complex via SecD. Specifically interacts with transmembrane segments of nascent integral membrane proteins during membrane integration.

It is found in the cell inner membrane. Required for the insertion and/or proper folding and/or complex formation of integral membrane proteins into the membrane. Involved in integration of membrane proteins that insert both dependently and independently of the Sec translocase complex, as well as at least some lipoproteins. Aids folding of multispanning membrane proteins. This is Membrane protein insertase YidC from Burkholderia multivorans (strain ATCC 17616 / 249).